A 278-amino-acid chain; its full sequence is Shikimate dehydrogenase (NADP(+)) (278 aa).

Residues 19–21 (SLS) and T66 contribute to the shikimate site. The active-site Proton acceptor is the K70. The shikimate site is built by N91 and D106. Residues 130–134 (GAGGS), 152–157 (NRTVEK), and L222 contribute to the NADP(+) site. Residue Y224 participates in shikimate binding. Residue G245 participates in NADP(+) binding.

The protein belongs to the shikimate dehydrogenase family. Homodimer.

It carries out the reaction shikimate + NADP(+) = 3-dehydroshikimate + NADPH + H(+). It functions in the pathway metabolic intermediate biosynthesis; chorismate biosynthesis; chorismate from D-erythrose 4-phosphate and phosphoenolpyruvate: step 4/7. Functionally, involved in the biosynthesis of the chorismate, which leads to the biosynthesis of aromatic amino acids. Catalyzes the reversible NADPH linked reduction of 3-dehydroshikimate (DHSA) to yield shikimate (SA). This is Shikimate dehydrogenase (NADP(+)) from Methanococcus aeolicus (strain ATCC BAA-1280 / DSM 17508 / OCM 812 / Nankai-3).